The primary structure comprises 145 residues: MLTSEEKAAVTGFWGKVKVDEVGAEALGRLLVVYPWTQRFFEHFGDLSSADAIMHNDKVKAHGKRVLDAFSDGLKHLDDLKGAFAKLSELHCDKLHVDPENFRLLGNVLVVVLARHFGKDFTPVLQADYQKVVTGVANALAHRYH.

Residues 1–145 (MLTSEEKAAV…VANALAHRYH (145 aa)) form the Globin domain. T11 is subject to Phosphothreonine. At K58 the chain carries N6-acetyllysine. H62 serves as a coordination point for heme b. N6-acetyllysine is present on K81. H91 is a binding site for heme b. Position 92 is an S-nitrosocysteine (C92).

It belongs to the globin family. Heterotetramer of two alpha chains and two beta chains. In terms of tissue distribution, red blood cells.

Functionally, involved in oxygen transport from the lung to the various peripheral tissues. The chain is Hemoglobin subunit beta (HBB) from Rangifer tarandus (Reindeer).